Here is a 101-residue protein sequence, read N- to C-terminus: Urease subunit beta (101 aa).

This sequence belongs to the urease beta subunit family. As to quaternary structure, heterotrimer of UreA (gamma), UreB (beta) and UreC (alpha) subunits. Three heterotrimers associate to form the active enzyme.

It is found in the cytoplasm. The catalysed reaction is urea + 2 H2O + H(+) = hydrogencarbonate + 2 NH4(+). It participates in nitrogen metabolism; urea degradation; CO(2) and NH(3) from urea (urease route): step 1/1. The sequence is that of Urease subunit beta from Burkholderia multivorans (strain ATCC 17616 / 249).